A 343-amino-acid polypeptide reads, in one-letter code: Small ribosomal subunit biogenesis GTPase RsgA (343 aa).

Residues 116 to 275 form the CP-type G domain; sequence RGQLKPVAAN…LIDSPGIREF (160 aa). Residues 163 to 166 and 217 to 225 contribute to the GTP site; these read NKAD and GQSGVGKSS. Positions 299, 304, 306, and 312 each coordinate Zn(2+).

This sequence belongs to the TRAFAC class YlqF/YawG GTPase family. RsgA subfamily. As to quaternary structure, monomer. Associates with 30S ribosomal subunit, binds 16S rRNA. Zn(2+) serves as cofactor.

It is found in the cytoplasm. One of several proteins that assist in the late maturation steps of the functional core of the 30S ribosomal subunit. Helps release RbfA from mature subunits. May play a role in the assembly of ribosomal proteins into the subunit. Circularly permuted GTPase that catalyzes slow GTP hydrolysis, GTPase activity is stimulated by the 30S ribosomal subunit. The protein is Small ribosomal subunit biogenesis GTPase RsgA of Pseudomonas syringae pv. tomato (strain ATCC BAA-871 / DC3000).